Reading from the N-terminus, the 168-residue chain is Phosphopantetheine adenylyltransferase (168 aa).

Threonine 14 serves as a coordination point for substrate. ATP is bound by residues 14–15 (TF) and histidine 22. The substrate site is built by lysine 46, leucine 78, and arginine 92. ATP-binding positions include 93 to 95 (GLR), glutamate 103, and 128 to 134 (YSFISSS).

The protein belongs to the bacterial CoaD family. Homohexamer. It depends on Mg(2+) as a cofactor.

The protein localises to the cytoplasm. It carries out the reaction (R)-4'-phosphopantetheine + ATP + H(+) = 3'-dephospho-CoA + diphosphate. Its pathway is cofactor biosynthesis; coenzyme A biosynthesis; CoA from (R)-pantothenate: step 4/5. Functionally, reversibly transfers an adenylyl group from ATP to 4'-phosphopantetheine, yielding dephospho-CoA (dPCoA) and pyrophosphate. This Xanthomonas campestris pv. campestris (strain 8004) protein is Phosphopantetheine adenylyltransferase.